Consider the following 153-residue polypeptide: Ribosomal RNA large subunit methyltransferase H (153 aa).

Residues L75, G102, and 121–126 (LSPLTM) contribute to the S-adenosyl-L-methionine site.

Belongs to the RNA methyltransferase RlmH family. As to quaternary structure, homodimer.

It is found in the cytoplasm. It catalyses the reaction pseudouridine(1915) in 23S rRNA + S-adenosyl-L-methionine = N(3)-methylpseudouridine(1915) in 23S rRNA + S-adenosyl-L-homocysteine + H(+). Specifically methylates the pseudouridine at position 1915 (m3Psi1915) in 23S rRNA. This is Ribosomal RNA large subunit methyltransferase H from Nitratiruptor sp. (strain SB155-2).